Consider the following 568-residue polypeptide: Urease subunit alpha (568 aa).

The 439-residue stretch at G130 to F568 folds into the Urease domain. H135, H137, and K218 together coordinate Ni(2+). An N6-carboxylysine modification is found at K218. H220 lines the substrate pocket. Positions 247 and 273 each coordinate Ni(2+). Residue H321 is the Proton donor of the active site. Residue D361 coordinates Ni(2+).

It belongs to the metallo-dependent hydrolases superfamily. Urease alpha subunit family. In terms of assembly, heterotrimer of UreA (gamma), UreB (beta) and UreC (alpha) subunits. Three heterotrimers associate to form the active enzyme. Ni cation serves as cofactor. Carboxylation allows a single lysine to coordinate two nickel ions.

The protein resides in the cytoplasm. It carries out the reaction urea + 2 H2O + H(+) = hydrogencarbonate + 2 NH4(+). It functions in the pathway nitrogen metabolism; urea degradation; CO(2) and NH(3) from urea (urease route): step 1/1. The polypeptide is Urease subunit alpha (Burkholderia mallei (strain NCTC 10247)).